The primary structure comprises 448 residues: N-succinylarginine dihydrolase (448 aa).

Substrate contacts are provided by residues 19–28, N110, and 137–138; these read GGLSYGNVAS and HR. The active site involves E174. R214 is a binding site for substrate. The active site involves H250. Positions 252 and 365 each coordinate substrate. The active-site Nucleophile is the C371.

This sequence belongs to the succinylarginine dihydrolase family. In terms of assembly, homodimer.

It carries out the reaction N(2)-succinyl-L-arginine + 2 H2O + 2 H(+) = N(2)-succinyl-L-ornithine + 2 NH4(+) + CO2. It participates in amino-acid degradation; L-arginine degradation via AST pathway; L-glutamate and succinate from L-arginine: step 2/5. Functionally, catalyzes the hydrolysis of N(2)-succinylarginine into N(2)-succinylornithine, ammonia and CO(2). This chain is N-succinylarginine dihydrolase, found in Ectopseudomonas mendocina (strain ymp) (Pseudomonas mendocina).